A 458-amino-acid polypeptide reads, in one-letter code: MKKQNPWISLSEEEKNQIFNFSENYKKFISKFKTEREVASYALDKAKKKGFLNAEEKKNLMPGDKIFYTCREKTVAFAIIGKNPIENGMNLIVSHTDSPRLDAKPSPISEENELVFLKTNYYGGIKKYQWLSTPLSIRGVIFLKNGEKVEINIGDNENDPVFIIPDILPHLDRKIQRNKKSDEIIEGENLKILIGSLPIETKEKNKVKLATLQLIKEKYKIEEEDFVSSEIEIVPAGTAKDVGFDKALIGAYGQDDKICVYTSLESIFDLEEIPNKTAICFLVDKEEIGSTGSTGLDSRYLEYFVSDMIFKIKKSEYNNLHVQKALWNSKSISADVCAAINPLFSSVHDEQNAPKLGYGIPIMKYTGHGGKSMASDADAELVSYIRQLLNKNNIAWQVATLGKVEEGGGGTVAKFLAGYGIRTIDMGPAVISMHSPMEITSKFDLYNAYLAYKAFYKE.

3 residues coordinate Zn(2+): His95, His170, and His434.

It belongs to the peptidase M18 family. It depends on Zn(2+) as a cofactor.

The polypeptide is Probable M18 family aminopeptidase 1 (Borreliella afzelii (strain PKo) (Borrelia afzelii)).